We begin with the raw amino-acid sequence, 374 residues long: Beta-1,3-N-acetylglucosaminyltransferase lunatic fringe (374 aa).

Residues 1 to 8 (MLKTYRGK) lie on the Cytoplasmic side of the membrane. The helical; Signal-anchor for type II membrane protein transmembrane segment at 9–29 (VVVSLAGATVTCLGFLLFLSQ) threads the bilayer. Topologically, residues 30–374 (HQRIQADGMQ…TPWCPPQVAY (345 aa)) are lumenal. An N-linked (GlcNAc...) asparagine glycan is attached at N40. The disordered stretch occupies residues 80–100 (RSRREADKPSEAPGAATDAPP). R123 provides a ligand contact to substrate. N-linked (GlcNAc...) asparagine glycosylation occurs at N162. 2 disulfides stabilise this stretch: C163–C174 and C192–C255. D196 provides a ligand contact to substrate. D197 is a binding site for Mn(2+). Residue D285 is part of the active site. H309 provides a ligand contact to Mn(2+). The cysteines at positions 359 and 368 are disulfide-linked.

It belongs to the glycosyltransferase 31 family. Mn(2+) is required as a cofactor. It depends on Co(2+) as a cofactor. A soluble form may be derived from the membrane form by proteolytic processing. As to expression, in the embryo, expressed along the A-P axis of the neural tube, within the lateral plate mesoderm, in the presomitic mesoderm and the somites, in specific rhombomeres of the hindbrain (even-numbered rhombomeres) and in the otic vesicles.

Its subcellular location is the golgi apparatus membrane. It carries out the reaction 3-O-(alpha-L-fucosyl)-L-threonyl-[EGF-like domain protein] + UDP-N-acetyl-alpha-D-glucosamine = 3-O-(N-acetyl-beta-D-glucosaminyl-(1-&gt;3)-alpha-L-fucosyl)-L-threonyl-[EGF-like domain protein] + UDP + H(+). It catalyses the reaction 3-O-(alpha-L-fucosyl)-L-seryl-[EGF-like domain protein] + UDP-N-acetyl-alpha-D-glucosamine = 3-O-(N-acetyl-beta-D-glucosaminyl-(1-&gt;3)-alpha-L-fucosyl)-L-seryl-[EGF-like domain protein] + UDP + H(+). Glycosyltransferase that initiates the elongation of O-linked fucose residues attached to EGF-like repeats in the extracellular domain of Notch molecules. Involved in the correct formation of boundaries in the somites and hindbrain. Required for Delta-Notch-mediated induction of hypochord cells at the lateral borders of the midline precursor domain. This is Beta-1,3-N-acetylglucosaminyltransferase lunatic fringe (lfng) from Danio rerio (Zebrafish).